The primary structure comprises 286 residues: Digeranylgeranylglyceryl phosphate synthase (286 aa).

Helical transmembrane passes span 21–41 (AVAA…FAVT), 42–62 (TAHV…GNAI), 96–116 (FLFV…IVLA), 133–155 (LPGV…GAAA), 162–181 (FGVV…REII), 214–234 (VLLV…FGIW), 235–255 (YLTL…QAPD), and 266–286 (RGMF…VAGI).

This sequence belongs to the UbiA prenyltransferase family. DGGGP synthase subfamily. The cofactor is Mg(2+).

Its subcellular location is the cell membrane. The enzyme catalyses sn-3-O-(geranylgeranyl)glycerol 1-phosphate + (2E,6E,10E)-geranylgeranyl diphosphate = 2,3-bis-O-(geranylgeranyl)-sn-glycerol 1-phosphate + diphosphate. It functions in the pathway membrane lipid metabolism; glycerophospholipid metabolism. Prenyltransferase that catalyzes the transfer of the geranylgeranyl moiety of geranylgeranyl diphosphate (GGPP) to the C2 hydroxyl of (S)-3-O-geranylgeranylglyceryl phosphate (GGGP). This reaction is the second ether-bond-formation step in the biosynthesis of archaeal membrane lipids. The polypeptide is Digeranylgeranylglyceryl phosphate synthase (Haloquadratum walsbyi (strain DSM 16790 / HBSQ001)).